We begin with the raw amino-acid sequence, 330 residues long: Glycine betaine/proline betaine-binding periplasmic protein (330 aa).

Residues 1–21 (MRHSVLFATAFATLISTQTFA) form the signal peptide. Residues tryptophan 86, histidine 90, and 161 to 163 (WGC) each bind substrate. A disulfide bridge connects residues cysteine 157 and cysteine 163.

In terms of assembly, the complex is composed of two ATP-binding proteins (ProV), two transmembrane proteins (ProW) and a solute-binding protein (ProX).

It localises to the periplasm. Functionally, part of the ProU ABC transporter complex involved in glycine betaine and proline betaine uptake. Binds glycine betaine and proline betaine with high affinity. This Escherichia coli (strain K12) protein is Glycine betaine/proline betaine-binding periplasmic protein.